The following is a 101-amino-acid chain: Small ribosomal subunit protein uS10 (101 aa).

This sequence belongs to the universal ribosomal protein uS10 family. Part of the 30S ribosomal subunit.

Its function is as follows. Involved in the binding of tRNA to the ribosomes. This is Small ribosomal subunit protein uS10 from Corynebacterium aurimucosum (strain ATCC 700975 / DSM 44827 / CIP 107346 / CN-1) (Corynebacterium nigricans).